The chain runs to 421 residues: 4-hydroxy-3-methylbut-2-en-1-yl diphosphate synthase (flavodoxin) (421 aa).

The [4Fe-4S] cluster site is built by cysteine 311, cysteine 314, cysteine 357, and glutamate 364.

The protein belongs to the IspG family. Requires [4Fe-4S] cluster as cofactor.

It carries out the reaction (2E)-4-hydroxy-3-methylbut-2-enyl diphosphate + oxidized [flavodoxin] + H2O + 2 H(+) = 2-C-methyl-D-erythritol 2,4-cyclic diphosphate + reduced [flavodoxin]. It participates in isoprenoid biosynthesis; isopentenyl diphosphate biosynthesis via DXP pathway; isopentenyl diphosphate from 1-deoxy-D-xylulose 5-phosphate: step 5/6. In terms of biological role, converts 2C-methyl-D-erythritol 2,4-cyclodiphosphate (ME-2,4cPP) into 1-hydroxy-2-methyl-2-(E)-butenyl 4-diphosphate. In Xanthomonas axonopodis pv. citri (strain 306), this protein is 4-hydroxy-3-methylbut-2-en-1-yl diphosphate synthase (flavodoxin).